A 134-amino-acid polypeptide reads, in one-letter code: Transcription antitermination protein NusB (134 aa).

This sequence belongs to the NusB family.

Involved in transcription antitermination. Required for transcription of ribosomal RNA (rRNA) genes. Binds specifically to the boxA antiterminator sequence of the ribosomal RNA (rrn) operons. The protein is Transcription antitermination protein NusB of Shewanella sp. (strain MR-4).